The primary structure comprises 328 residues: Carbonic anhydrase-related protein 11 (328 aa).

An N-terminal signal peptide occupies residues 1–23; it reads MGGAARLSAPQALVLWAALGAAA. Residues 33–303 form the Alpha-carbonic anhydrase domain; the sequence is DWWSYKENLQ…LAHRALRGNR (271 aa). Asparagine 118 carries an N-linked (GlcNAc...) asparagine glycan. The interval 300–328 is disordered; that stretch reads RGNRDPRHPERRCRGPNYRLHVDGGPHGR. A compositionally biased stretch (basic and acidic residues) spans 319-328; that stretch reads LHVDGGPHGR.

Belongs to the alpha-carbonic anhydrase family.

It localises to the secreted. Its function is as follows. Does not have a catalytic activity. The sequence is that of Carbonic anhydrase-related protein 11 (Ca11) from Mus musculus (Mouse).